Consider the following 425-residue polypeptide: Riboflavin biosynthesis protein RibBA (425 aa).

The DHBP synthase stretch occupies residues 1-204 (MTRLDSVERA…IADLIEWRRK (204 aa)). D-ribulose 5-phosphate is bound by residues 28 to 29 (RE), aspartate 33, 141 to 145 (RPGHT), and glutamate 165. Residue glutamate 29 participates in Mg(2+) binding. Residue histidine 144 participates in Mg(2+) binding. The interval 205 to 425 (HEKHIERVAE…HLPGEFGGAL (221 aa)) is GTP cyclohydrolase II. Residue 259–263 (RVHSE) coordinates GTP. Residues cysteine 264, cysteine 275, and cysteine 277 each contribute to the Zn(2+) site. Residues glutamine 280, 303–305 (EGR), and threonine 325 contribute to the GTP site. Aspartate 337 functions as the Proton acceptor; for GTP cyclohydrolase activity in the catalytic mechanism. The Nucleophile; for GTP cyclohydrolase activity role is filled by arginine 339. Positions 360 and 365 each coordinate GTP.

The protein in the N-terminal section; belongs to the DHBP synthase family. This sequence in the C-terminal section; belongs to the GTP cyclohydrolase II family. Mg(2+) serves as cofactor. It depends on Mn(2+) as a cofactor. Zn(2+) is required as a cofactor.

It catalyses the reaction D-ribulose 5-phosphate = (2S)-2-hydroxy-3-oxobutyl phosphate + formate + H(+). The catalysed reaction is GTP + 4 H2O = 2,5-diamino-6-hydroxy-4-(5-phosphoribosylamino)-pyrimidine + formate + 2 phosphate + 3 H(+). Its pathway is cofactor biosynthesis; riboflavin biosynthesis; 2-hydroxy-3-oxobutyl phosphate from D-ribulose 5-phosphate: step 1/1. It participates in cofactor biosynthesis; riboflavin biosynthesis; 5-amino-6-(D-ribitylamino)uracil from GTP: step 1/4. In terms of biological role, catalyzes the conversion of D-ribulose 5-phosphate to formate and 3,4-dihydroxy-2-butanone 4-phosphate. Catalyzes the conversion of GTP to 2,5-diamino-6-ribosylamino-4(3H)-pyrimidinone 5'-phosphate (DARP), formate and pyrophosphate. The polypeptide is Riboflavin biosynthesis protein RibBA (Mycobacterium ulcerans (strain Agy99)).